A 223-amino-acid chain; its full sequence is MIPQTLEQLLSQAQSIAGLTFGELADELHIPVPIDLKRDKGWVGMLLERALGATAGSKAEQDFSHLGVELKTLPINAEGYPLETTFVSLAPLVQNSGVKWENSHVRHKLSCVLWMPIEGSRHIPLRERHIGAPIFWKPTAEQERQLKQDWEELMDLIVLGKLDQITARIGEVMQLRPKGANSRAVTKGIGKNGEIIDTLPLGFYLRKEFTAQILNAFLETKSL.

It belongs to the MutH family.

The protein resides in the cytoplasm. Its function is as follows. Sequence-specific endonuclease that cleaves unmethylated GATC sequences. It is involved in DNA mismatch repair. This is DNA mismatch repair protein MutH from Haemophilus influenzae (strain ATCC 51907 / DSM 11121 / KW20 / Rd).